Reading from the N-terminus, the 135-residue chain is Small ribosomal subunit protein bS18 (135 aa).

Residues 1-65 (MARPDMGGPK…GDEGGGRRGF (65 aa)) form a disordered region. Over residues 9–41 (PKTGGFGGPRSGGFGGGGGGGGGFGGGGFGGGR) the composition is skewed to gly residues. Positions 42–61 (GGDRGDRGDRDDRGGDEGGG) are enriched in basic and acidic residues.

This sequence belongs to the bacterial ribosomal protein bS18 family. As to quaternary structure, part of the 30S ribosomal subunit. Forms a tight heterodimer with protein bS6.

Functionally, binds as a heterodimer with protein bS6 to the central domain of the 16S rRNA, where it helps stabilize the platform of the 30S subunit. This is Small ribosomal subunit protein bS18 from Anaeromyxobacter sp. (strain K).